The following is a 217-amino-acid chain: Proteasome subunit beta type-9 (217 aa).

Residues 1–18 constitute a propeptide, removed in mature form; it reads MLGEEAEPQWISEEVKTG. Residue Thr-19 is the Nucleophile of the active site.

It belongs to the peptidase T1B family. As to quaternary structure, the 26S proteasome consists of a 20S proteasome core and two 19S regulatory subunits. The 20S proteasome core is composed of 28 subunits that are arranged in four stacked rings, resulting in a barrel-shaped structure. The two end rings are each formed by seven alpha subunits, and the two central rings are each formed by seven beta subunits. The catalytic chamber with the active sites is on the inside of the barrel. Component of the immunoproteasome, where it displaces the equivalent housekeeping subunit PSMB6. In terms of processing, autocleaved. The resulting N-terminal Thr residue of the mature subunit is responsible for the nucleophile proteolytic activity.

It is found in the cytoplasm. The protein resides in the nucleus. The enzyme catalyses Cleavage of peptide bonds with very broad specificity.. Functionally, the proteasome is a multicatalytic proteinase complex which is characterized by its ability to cleave peptides with Arg, Phe, Tyr, Leu, and Glu adjacent to the leaving group at neutral or slightly basic pH. The proteasome has an ATP-dependent proteolytic activity. This subunit is involved in antigen processing to generate class I binding peptides. The chain is Proteasome subunit beta type-9 (psmb9) from Oryzias latipes (Japanese rice fish).